The sequence spans 724 residues: Hyperosmolality-gated Ca2+ permeable channel 3.1 (724 aa).

Residues methionine 1–glycine 4 are Extracellular-facing. A helical transmembrane segment spans residues serine 5 to threonine 25. The Cytoplasmic segment spans residues tryptophan 26–phenylalanine 85. A helical transmembrane segment spans residues valine 86–proline 108. Residues leucine 109–serine 147 lie on the Extracellular side of the membrane. A helical membrane pass occupies residues arginine 148–alanine 170. The Cytoplasmic portion of the chain corresponds to tyrosine 171–serine 358. Positions glutamate 241 to threonine 309 form a coiled coil. Residues arginine 359–serine 385 form a helical membrane-spanning segment. At alanine 386–threonine 411 the chain is on the extracellular side. Residues valine 412 to alanine 439 traverse the membrane as a helical segment. The Cytoplasmic portion of the chain corresponds to glutamate 440–alanine 448. Residues isoleucine 449–glycine 472 traverse the membrane as a helical segment. Residues threonine 473 to serine 497 are Extracellular-facing. A helical transmembrane segment spans residues leucine 498 to isoleucine 529. The Cytoplasmic portion of the chain corresponds to phenylalanine 530 to serine 554. A helical transmembrane segment spans residues tyrosine 555–valine 574. Isoleucine 575 is a topological domain (extracellular). Residues alanine 576 to leucine 594 traverse the membrane as a helical segment. The Cytoplasmic segment spans residues arginine 595–methionine 612. A helical membrane pass occupies residues tryptophan 613–glycine 636. The Extracellular segment spans residues alanine 637–phenylalanine 641. Residues tyrosine 642–glutamine 662 form a helical membrane-spanning segment. The Cytoplasmic portion of the chain corresponds to lysine 663–valine 724.

Belongs to the CSC1 (TC 1.A.17) family. As to quaternary structure, homodimer.

Its subcellular location is the membrane. Functionally, acts as a hyperosmolarity-gated non-selective cation channel that permeates Ca(2+) ions. Mechanosensitive ion channel that converts mechanical stimuli into a flow of ions: activated in response to membrane stretch. Not activated in response to membrane poke. In Arabidopsis thaliana (Mouse-ear cress), this protein is Hyperosmolality-gated Ca2+ permeable channel 3.1.